The sequence spans 254 residues: tRNA (guanine-N(7)-)-methyltransferase (254 aa).

The segment covering 1 to 11 has biased composition (basic and acidic residues); it reads MSISDNSREEL. Residues 1–25 are disordered; the sequence is MSISDNSREELGELPAGRPLQSEFN. The S-adenosyl-L-methionine site is built by Glu-83, Glu-108, Asp-135, and Asp-158. The active site involves Asp-158. Lys-162 provides a ligand contact to substrate. The interval 164–169 is interaction with RNA; the sequence is RHNKRR. Substrate is bound by residues Asp-194 and 232–235; that span reads TKFE.

The protein belongs to the class I-like SAM-binding methyltransferase superfamily. TrmB family.

The catalysed reaction is guanosine(46) in tRNA + S-adenosyl-L-methionine = N(7)-methylguanosine(46) in tRNA + S-adenosyl-L-homocysteine. It participates in tRNA modification; N(7)-methylguanine-tRNA biosynthesis. Its function is as follows. Catalyzes the formation of N(7)-methylguanine at position 46 (m7G46) in tRNA. The polypeptide is tRNA (guanine-N(7)-)-methyltransferase (Corynebacterium efficiens (strain DSM 44549 / YS-314 / AJ 12310 / JCM 11189 / NBRC 100395)).